Here is a 400-residue protein sequence, read N- to C-terminus: Chalcone synthase WHP1 (400 aa).

Cysteine 167 is an active-site residue.

The protein belongs to the thiolase-like superfamily. Chalcone/stilbene synthases family.

It carries out the reaction (E)-4-coumaroyl-CoA + 3 malonyl-CoA + 3 H(+) = 2',4,4',6'-tetrahydroxychalcone + 3 CO2 + 4 CoA. It functions in the pathway secondary metabolite biosynthesis; flavonoid biosynthesis. Functionally, the primary product of this enzyme is 4,2',4',6'-tetrahydroxychalcone (also termed naringenin-chalcone or chalcone) which can under specific conditions spontaneously isomerize into naringenin. This is Chalcone synthase WHP1 (WHP1) from Zea mays (Maize).